Reading from the N-terminus, the 531-residue chain is MAAVKTLNPKAEVARAQAALAVNISAARGLQDVLRTNLGPKGTMKMLVSGAGDIKLTKDGNVLLHEMQIQHPTASLIAKVATAQDDITGDGTTSNVLIIGELLKQADLYISEGLHPRIITEGFEAAKEKALQFLEEVKVSREMDRETLIDVARTSLRTKVHAELADVLTEAVVDSILAIKKQDEPIDLFMIEIMEMKHKSETDTSLIRGLVLDHGARHPDMKKRVEDAYILTCNVSLEYEKTEVNSGFFYKSAEEREKLVKAERKFIEDRVKKIIELKRKVCGDSDKGFVVINQKGIDPFSLDALSKEGIVALRRAKRRNMERLTLACGGVALNSFDDLSPDQLGHAGLVYEYTLGEEKFTFIEKCNNPRSVTLLIKGPNKHTLTQIKDAVRDGLRAVRNAIDDGCVVPGAGAVEVAMAEALIKHKPSVKGRAQLGVQAFADALLIIPKVLAQNSGFDLQETLVKIQAEHSESGQLVGVDLNTGEPMVAAEVGVWDNYCVKKQLLHSCTVIATNILLVDEIMRAGMSSLKG.

Ala2 bears the N-acetylalanine mark. Residue Lys5 is modified to N6-acetyllysine. Gly39 serves as a coordination point for ADP. Residue Gly39 coordinates ATP. Mg(2+) is bound at residue Asp90. Gly91, Thr92, Thr93, Ser94, Thr158, and Lys159 together coordinate ADP. The ATP site is built by Gly91, Thr92, and Thr93. Lys199 is subject to N6-acetyllysine. Ser205 is subject to Phosphoserine. Lys251 participates in a covalent cross-link: Glycyl lysine isopeptide (Lys-Gly) (interchain with G-Cter in SUMO2). N6-acetyllysine is present on residues Lys287, Lys365, Lys377, and Lys388. Ala411 is a binding site for ADP. The ATP site is built by Ala411, Gly412, Asp496, and Lys501. Residue Asp496 coordinates ADP.

This sequence belongs to the TCP-1 chaperonin family. As to quaternary structure, component of the chaperonin-containing T-complex (TRiC), a hexadecamer composed of two identical back-to-back stacked rings enclosing a protein folding chamber. Each ring is made up of eight different subunits: TCP1/CCT1, CCT2, CCT3, CCT4, CCT5, CCT6A/CCT6, CCT7, CCT8. Interacts with PACRG.

It is found in the cytoplasm. The enzyme catalyses ATP + H2O = ADP + phosphate + H(+). In terms of biological role, component of the chaperonin-containing T-complex (TRiC), a molecular chaperone complex that assists the folding of actin, tubulin and other proteins upon ATP hydrolysis. The TRiC complex mediates the folding of WRAP53/TCAB1, thereby regulating telomere maintenance. This chain is T-complex protein 1 subunit zeta (CCT6), found in Pongo abelii (Sumatran orangutan).